Reading from the N-terminus, the 360-residue chain is sn-glycerol-3-phosphate import ATP-binding protein UgpC (360 aa).

Positions 4 to 235 (LSLKGVRKSY…PATTFVASFI (232 aa)) constitute an ABC transporter domain. Residue 37–44 (GPSGCGKS) coordinates ATP.

It belongs to the ABC transporter superfamily. sn-glycerol-3-phosphate importer (TC 3.A.1.1.3) family. In terms of assembly, the complex is composed of two ATP-binding proteins (UgpC), two transmembrane proteins (UgpA and UgpE) and a solute-binding protein (UgpB).

The protein resides in the cell inner membrane. It catalyses the reaction sn-glycerol 3-phosphate(out) + ATP + H2O = sn-glycerol 3-phosphate(in) + ADP + phosphate + H(+). In terms of biological role, part of the ABC transporter complex UgpBAEC involved in sn-glycerol-3-phosphate (G3P) import. Responsible for energy coupling to the transport system. The sequence is that of sn-glycerol-3-phosphate import ATP-binding protein UgpC from Burkholderia thailandensis (strain ATCC 700388 / DSM 13276 / CCUG 48851 / CIP 106301 / E264).